Reading from the N-terminus, the 180-residue chain is MKTIEVDDELYSYIASHTKHIGESASDILRRMLKFSATTQPTASAVKGTPAAQPVAEAKPVNPVKDKVRAMRELLLSDEYAEQKKAVNRFMLILTTLYSLDHHAFAEATESLHGRTRVYFAADEQTLLKNGNQTKPKHVPGTPYWVITNTNTGRKCSMIEHIMQSMQFPAELIEKVCGTI.

3 interaction with DNA regions span residues 86-87 (AV), 115-119 (RTRVY), and 149-155 (NTNTGRK).

Belongs to the SeqA family. Homodimer. Polymerizes to form helical filaments.

The protein localises to the cytoplasm. Functionally, negative regulator of replication initiation, which contributes to regulation of DNA replication and ensures that replication initiation occurs exactly once per chromosome per cell cycle. Binds to pairs of hemimethylated GATC sequences in the oriC region, thus preventing assembly of replication proteins and re-initiation at newly replicated origins. Repression is relieved when the region becomes fully methylated. This is Negative modulator of initiation of replication from Salmonella typhimurium (strain LT2 / SGSC1412 / ATCC 700720).